Consider the following 1372-residue polypeptide: Collagen alpha-2(I) chain (1372 aa).

Positions 1-22 are cleaved as a signal peptide; that stretch reads MLSFVDTRTLLLLAVTSCLATC. Glutamine 23 is subject to Pyrrolidone carboxylic acid. The propeptide at 23 to 85 is N-terminal propeptide; it reads QSLQMGSVRK…PPGLTGNFAA (63 aa). A disordered region spans residues 28–1135; the sequence is GSVRKGPTGD…DQPRSQPSLR (1108 aa). Pro residues predominate over residues 59–77; sequence VGPPGPPGAPGPPGPPGPP. Residue glutamine 86 is modified to Pyrrolidone carboxylic acid. Residue lysine 90 is modified to Allysine. Over residues 95–146 the composition is skewed to low complexity; it reads GPGPMGLMGPRGPPGAVGAPGPQGFQGPAGEPGEPGQTGPAGSRGPAGPPGK. Positions 147–161 are enriched in basic and acidic residues; sequence AGEDGHPGKPGRPGE. Position 183 is a 5-hydroxylysine; alternate (lysine 183). Lysine 183 is a glycosylation site (O-linked (Gal...) hydroxylysine; alternate). Low complexity-rich tracts occupy residues 231 to 260, 285 to 299, 306 to 327, 336 to 348, 390 to 416, 476 to 495, and 519 to 537; these read VGAPGPAGARGSDGSVGPVGPAGPIGSAGP, AGPRGEAGLPGLSGP, PGANGLTGAKGATGLPGVAGAP, PGPVGAAGATGPR, PGEPGSAGPAGPPGLRGSPGSRGLPGA, LPGIDGRPGPIGPAGPRGEA, and PGLAGARGAPGPDGNNGAQ. A compositionally biased stretch (gly residues) spans 544–553; the sequence is GVQGGKGEQG. A compositionally biased stretch (low complexity) spans 600–639; it reads PGESGAAGPSGPIGIRGPSGAPGPDGNKGEAGAVGAPGSA. The span at 640–649 shows a compositional bias: gly residues; the sequence is GASGPGGLPG. Low complexity-rich tracts occupy residues 674–716 and 725–743; these read NPGR…PRGS and PAGPNGFAGPAGSAGQPGA. Residues 744–753 show a composition bias toward basic and acidic residues; the sequence is KGEKGTKGPK. The span at 755-771 shows a compositional bias: low complexity; that stretch reads ENGIVGPTGPVGAAGPS. The segment covering 781–790 has biased composition (gly residues); the sequence is GSRGDGGPPG. Positions 783 to 785 match the Cell attachment site motif; the sequence is RGD. The segment covering 792-801 has biased composition (low complexity); that stretch reads TGFPGAAGRT. A Cell attachment site motif is present at residues 828–830; the sequence is RGD. Composition is skewed to low complexity over residues 855–882, 891–927, 957–978, and 987–1007; these read SGEPGTTGPPGTAGPQGLLGAPGILGLP, PGIAGALGEPGPLGIAGPPGARGPPGAVGSPGVNGAP, PGNIGPTGAAGAPGPHGSVGPA, and PGPAGSVGPVGAVGPRGPSGP. A Cell attachment site motif is present at residues 1011–1013; that stretch reads RGD. Residues 1011–1022 are compositionally biased toward basic and acidic residues; that stretch reads RGDKGEPGDKGA. Residues 1095–1107 are compositionally biased toward pro residues; that stretch reads AGPPGPPGPPGPP. Positions 1108-1120 are enriched in gly residues; the sequence is GVSGGGYDFGFEG. The propeptide at 1126–1372 is C-terminal propeptide; it reads DQPRSQPSLR…RVEVGPVCFK (247 aa). Positions 1139-1372 constitute a Fibrillar collagen NC1 domain; the sequence is YEVDATLKSL…RVEVGPVCFK (234 aa). Disulfide bonds link cysteine 1169/cysteine 1201, cysteine 1209/cysteine 1370, and cysteine 1278/cysteine 1323. Ca(2+) contacts are provided by aspartate 1187, asparagine 1189, glutamine 1190, cysteine 1192, and aspartate 1195. N-linked (GlcNAc...) asparagine glycosylation occurs at asparagine 1273.

Belongs to the fibrillar collagen family. In terms of assembly, trimers of one alpha 2(I) and two alpha 1(I) chains. Interacts (via C-terminus) with TMEM131 (via PapD-L domain); the interaction is direct and is involved in assembly and TRAPPIII ER-to-Golgi transport complex-dependent secretion of collagen. Post-translationally, proline residues at the third position of the tripeptide repeating unit (G-X-P) are hydroxylated in some or all of the chains. Proline residues at the second position of the tripeptide repeating unit (G-P-X) are hydroxylated in some of the chains. In terms of tissue distribution, forms the fibrils of tendon, ligaments and bones. In bones the fibrils are mineralized with calcium hydroxyapatite. Expressed in flagella of epididymal sperm.

It is found in the secreted. Its subcellular location is the extracellular space. It localises to the extracellular matrix. Type I collagen is a member of group I collagen (fibrillar forming collagen). The polypeptide is Collagen alpha-2(I) chain (Col1a2) (Rattus norvegicus (Rat)).